The following is a 68-amino-acid chain: Large ribosomal subunit protein eL24 (68 aa).

C7, C10, C33, and C37 together coordinate Zn(2+). The C4-type zinc finger occupies 7–37 (CSYCGREFEPGTGKMFVRNDGRVLFFCSSKC).

It belongs to the eukaryotic ribosomal protein eL24 family. In terms of assembly, part of the 50S ribosomal subunit. Forms a cluster with proteins L3 and L14. It depends on Zn(2+) as a cofactor.

In terms of biological role, binds to the 23S rRNA. This chain is Large ribosomal subunit protein eL24, found in Thermococcus gammatolerans (strain DSM 15229 / JCM 11827 / EJ3).